Reading from the N-terminus, the 469-residue chain is 3-isopropylmalate dehydratase large subunit (469 aa).

Residues C347, C410, and C413 each coordinate [4Fe-4S] cluster.

The protein belongs to the aconitase/IPM isomerase family. LeuC type 1 subfamily. In terms of assembly, heterodimer of LeuC and LeuD. [4Fe-4S] cluster serves as cofactor.

The catalysed reaction is (2R,3S)-3-isopropylmalate = (2S)-2-isopropylmalate. It functions in the pathway amino-acid biosynthesis; L-leucine biosynthesis; L-leucine from 3-methyl-2-oxobutanoate: step 2/4. Catalyzes the isomerization between 2-isopropylmalate and 3-isopropylmalate, via the formation of 2-isopropylmaleate. The sequence is that of 3-isopropylmalate dehydratase large subunit from Burkholderia ambifaria (strain MC40-6).